The sequence spans 490 residues: Glutamyl-tRNA(Gln) amidotransferase subunit A (490 aa).

Catalysis depends on charge relay system residues Lys-76 and Ser-151. Ser-175 functions as the Acyl-ester intermediate in the catalytic mechanism.

This sequence belongs to the amidase family. GatA subfamily. Heterotrimer of A, B and C subunits.

It catalyses the reaction L-glutamyl-tRNA(Gln) + L-glutamine + ATP + H2O = L-glutaminyl-tRNA(Gln) + L-glutamate + ADP + phosphate + H(+). In terms of biological role, allows the formation of correctly charged Gln-tRNA(Gln) through the transamidation of misacylated Glu-tRNA(Gln) in organisms which lack glutaminyl-tRNA synthetase. The reaction takes place in the presence of glutamine and ATP through an activated gamma-phospho-Glu-tRNA(Gln). This chain is Glutamyl-tRNA(Gln) amidotransferase subunit A, found in Methylobacillus flagellatus (strain ATCC 51484 / DSM 6875 / VKM B-1610 / KT).